The following is a 269-amino-acid chain: Pertussis toxin subunit 1 homolog (269 aa).

Residues 1–34 form the signal peptide; the sequence is MRCTRAIRQTARTGWLTWLAILAVTAPMTSPAWA.

The protein belongs to the bacterial exotoxin subunit A family.

This is Pertussis toxin subunit 1 homolog (ptxA) from Bordetella parapertussis (strain 12822 / ATCC BAA-587 / NCTC 13253).